Here is a 110-residue protein sequence, read N- to C-terminus: Thioredoxin (110 aa).

The region spanning 2-110 is the Thioredoxin domain; it reads SALLVEIDKD…IDAMIAKHVG (109 aa). A disulfide bridge links C33 with C36.

It belongs to the thioredoxin family.

Its function is as follows. Participates in various redox reactions through the reversible oxidation of its active center dithiol to a disulfide and catalyzes dithiol-disulfide exchange reactions. The chain is Thioredoxin (trxA) from Peptoclostridium acidaminophilum (Eubacterium acidaminophilum).